We begin with the raw amino-acid sequence, 249 residues long: Ribonuclease PH (249 aa).

Phosphate is bound by residues R86 and 124–126 (GTR).

This sequence belongs to the RNase PH family. As to quaternary structure, homohexameric ring arranged as a trimer of dimers.

The catalysed reaction is tRNA(n+1) + phosphate = tRNA(n) + a ribonucleoside 5'-diphosphate. Functionally, phosphorolytic 3'-5' exoribonuclease that plays an important role in tRNA 3'-end maturation. Removes nucleotide residues following the 3'-CCA terminus of tRNAs; can also add nucleotides to the ends of RNA molecules by using nucleoside diphosphates as substrates, but this may not be physiologically important. Probably plays a role in initiation of 16S rRNA degradation (leading to ribosome degradation) during starvation. In Clostridium botulinum (strain Alaska E43 / Type E3), this protein is Ribonuclease PH.